The primary structure comprises 217 residues: Probable GTP-binding protein EngB (217 aa).

In terms of domain architecture, EngB-type G spans 33-217; sequence GPTEIAFAGR…RAAIELAVAR (185 aa). GTP-binding positions include 41-48, 68-72, 95-98, 162-165, and 196-198; these read GRSNVGKS, GRTQE, DMPG, TKTD, and TSS. Mg(2+) is bound by residues Ser48 and Thr70.

Belongs to the TRAFAC class TrmE-Era-EngA-EngB-Septin-like GTPase superfamily. EngB GTPase family. Mg(2+) is required as a cofactor.

Functionally, necessary for normal cell division and for the maintenance of normal septation. The chain is Probable GTP-binding protein EngB from Sinorhizobium medicae (strain WSM419) (Ensifer medicae).